The chain runs to 80 residues: Small ribosomal subunit protein uS17 (80 aa).

This sequence belongs to the universal ribosomal protein uS17 family. As to quaternary structure, part of the 30S ribosomal subunit.

Functionally, one of the primary rRNA binding proteins, it binds specifically to the 5'-end of 16S ribosomal RNA. This chain is Small ribosomal subunit protein uS17, found in Brucella anthropi (strain ATCC 49188 / DSM 6882 / CCUG 24695 / JCM 21032 / LMG 3331 / NBRC 15819 / NCTC 12168 / Alc 37) (Ochrobactrum anthropi).